The following is a 382-amino-acid chain: FK506-binding protein 4 (382 aa).

Residues 139-274 (GLEVDEEIES…KEEPKKKITK (136 aa)) are disordered. Over residues 141-173 (EVDEEIESDEEVESDEEIESDEEIESEEEEEEP) the composition is skewed to acidic residues. Composition is skewed to basic and acidic residues over residues 180–190 (RPAEEVKEIAS) and 196–270 (EKKE…EPKK). In terms of domain architecture, PPIase FKBP-type spans 295 to 382 (GQRVGMRYIG…VFDVKLLSMK (88 aa)).

Belongs to the FKBP-type PPIase family. FKBP3/4 subfamily. As to quaternary structure, binds to histones H3 and H4.

The protein resides in the nucleus. It carries out the reaction [protein]-peptidylproline (omega=180) = [protein]-peptidylproline (omega=0). Inhibited by both FK506 and rapamycin. In terms of biological role, PPIase that acts as a histone chaperone. Histone proline isomerase that increases the rate of cis-trans isomerization at prolines on the histone H3 N-terminal tail. Proline isomerization influences H3 methylation thereby regulating gene expression. The polypeptide is FK506-binding protein 4 (FKBP4) (Rhizopus delemar (strain RA 99-880 / ATCC MYA-4621 / FGSC 9543 / NRRL 43880) (Mucormycosis agent)).